A 786-amino-acid polypeptide reads, in one-letter code: Toll-like receptor 1 (786 aa).

An N-terminal signal peptide occupies residues 1-24 (MTSIFHFAIIFMLILQIRIQLSEE). The Extracellular portion of the chain corresponds to 25-580 (SEFLVDRSKN…HMSELSCNIT (556 aa)). N-linked (GlcNAc...) asparagine glycosylation occurs at Asn51. LRR repeat units follow at residues 54 to 77 (QNYI…LIIS), 78 to 101 (HNRI…LDLS), 102 to 125 (HNKL…SFNA), 126 to 150 (FDAL…STTH), 151 to 175 (LEKS…GETY), 176 to 199 (GEKE…FPTN), 200 to 223 (KEFH…NIKC), 224 to 250 (VLED…SNLT), 251 to 278 (LNNI…YFSI), 279 to 308 (SNVK…HQVV), 309 to 337 (SDVF…SGTR), 338 to 361 (MVHM…NLLT), 362 to 388 (DTVF…KELS), 389 to 414 (KIAE…SYDE), 415 to 437 (KKGD…ILTD), 438 to 457 (TIFR…SNKI), 458 to 478 (KSIP…VAFN), 479 to 500 (SLTD…IDHN), and 501 to 524 (SVSH…AGDN). Cys110 and Cys132 are disulfide-bonded. N-linked (GlcNAc...) asparagine glycans are attached at residues Asn137 and Asn163. Cys223 and Cys230 are disulfide-bonded. Residues 313–316 (GFPQ) are interaction with bacterial lipopeptide. Asn330 carries an N-linked (GlcNAc...) asparagine glycan. Cys343 and Cys368 are joined by a disulfide. An intrachain disulfide couples Cys419 to Cys442. A glycan (N-linked (GlcNAc...) asparagine) is linked at Asn429. Positions 525–579 (PFQCTCELGEFVKNIDQVSSEVLEGWPDSYKCDYPESYRGTLLKDFHMSELSCNI) constitute an LRRCT domain. Asn578 is a glycosylation site (N-linked (GlcNAc...) asparagine). Residues 581–601 (LLIVTIVATMLVLAVTVTSLC) traverse the membrane as a helical segment. The Cytoplasmic portion of the chain corresponds to 602–786 (SYLDLPWYLR…NIKLTEQAKK (185 aa)). The region spanning 635–776 (LQFHAFISYS…LFWANLRAAI (142 aa)) is the TIR domain.

It belongs to the Toll-like receptor family. In terms of assembly, interacts (via extracellular domain) with TLR2. TLR2 seems to exist in heterodimers with either TLR1 or TLR6 before stimulation by the ligand. The heterodimers form bigger oligomers in response to their corresponding ligands as well as further heterotypic associations with other receptors such as CD14 and/or CD36. The activation cluster TLR2:TLR1:CD14 forms in response to triacylated lipopeptides. Binds MYD88 (via TIR domain). Interacts with CNPY3. Interacts with neutrophil recruitment protein from Aedes aegypti saliva; the interaction probably promotes activation of canonical NF-kappa-B signaling in skin-resident macrophages and subsequent expression of neutrophil chemoattractants. In terms of tissue distribution, ubiquitous. Highly expressed in spleen, ovary, peripheral blood leukocytes, thymus and small intestine.

The protein localises to the cell membrane. It is found in the cytoplasmic vesicle. The protein resides in the phagosome membrane. It localises to the membrane raft. Its subcellular location is the golgi apparatus. Participates in the innate immune response to microbial agents. Specifically recognizes diacylated and triacylated lipopeptides. Cooperates with TLR2 to mediate the innate immune response to bacterial lipoproteins or lipopeptides. Forms the activation cluster TLR2:TLR1:CD14 in response to triacylated lipopeptides, this cluster triggers signaling from the cell surface and subsequently is targeted to the Golgi in a lipid-raft dependent pathway. Acts via MYD88 and TRAF6, leading to NF-kappa-B activation, cytokine secretion and the inflammatory response. The polypeptide is Toll-like receptor 1 (TLR1) (Homo sapiens (Human)).